We begin with the raw amino-acid sequence, 341 residues long: MDEPVRLSLAEVHVLCRDTLVAAGLGEEHAQAIARSITRAEADECHSHGLYRLIGYVASVRSGKAERHALPALARATPAVLRVDAKHGFAPLAVETGVPALIAAAKEIGIAALAIHDCYHFSALWADIEPAVEAGLAAWCFTVGQCCVAPAGGTTPLLGTNPFAFGWPGPSGRPFIFDFATSAAARGEIELKRRGGEKIPPGWAVGPDGAPTTDPAAALAGALLPFGGHKGSALSMMVELIAGPLIGDLTSRQSKAVENGDGGPPLGGELFIAIDPAVFGTGNLSSRLADADELFALAKAQPGVRLPSERRYQARERSRTNGIAVPAALFAELQALGPRGS.

Catalysis depends on serine 47, which acts as the Charge relay system. The active-site Proton donor is the histidine 48. Arginine 52 is a binding site for substrate. Residue 120 to 124 participates in NADP(+) binding; it reads HFSAL. Threonine 160 provides a ligand contact to substrate. Residue 178 to 180 participates in NADP(+) binding; sequence DFA. Substrate is bound at residue 186 to 187; it reads RG. The active-site Charge relay system is glutamate 188. NADP(+) is bound by residues 229-230 and 305-311; these read HK and RLPSERR.

It belongs to the LDH2/MDH2 oxidoreductase family. As to quaternary structure, homodimer.

The enzyme catalyses L-proline + NAD(+) = 1-pyrroline-2-carboxylate + NADH + H(+). It carries out the reaction L-proline + NADP(+) = 1-pyrroline-2-carboxylate + NADPH + H(+). Functionally, catalyzes the reduction of Delta(1)-pyrroline-2-carboxylate (Pyr2C) to L-proline, using NADPH as the electron donor. Is likely involved in a degradation pathway that converts cis- and trans-3-hydroxy-L-proline (c3LHyp and t3LHyp) to L-proline, which would allow S.novella to grow on c3LHyp or t3LHyp as a sole carbon source. This Ancylobacter novellus (strain ATCC 8093 / DSM 506 / JCM 20403 / CCM 1077 / IAM 12100 / NBRC 12443 / NCIMB 10456) (Starkeya novella) protein is Delta(1)-pyrroline-2-carboxylate reductase.